The sequence spans 261 residues: Kallikrein 1-related peptidase b9 (261 aa).

An N-terminal signal peptide occupies residues 1 to 18 (MRFLILFLALSLGGIDAA). Positions 19-24 (PPVHSR) are cleaved as a propeptide — activation peptide. The Peptidase S1 domain maps to 25 to 258 (IVGGFKCEKN…FTSWIKDTMA (234 aa)). Disulfide bonds link C31-C173, C50-C66, C152-C219, C184-C198, and C209-C234. The Charge relay system role is filled by H65. N102 carries N-linked (GlcNAc...) asparagine glycosylation. The active-site Charge relay system is D120. The Charge relay system role is filled by S213.

This sequence belongs to the peptidase S1 family. Kallikrein subfamily.

It carries out the reaction Preferential cleavage of Arg-|-Xaa bonds in small molecule substrates. Highly selective action to release kallidin (lysyl-bradykinin) from kininogen involves hydrolysis of Met-|-Xaa or Leu-|-Xaa.. Glandular kallikreins cleave Met-Lys and Arg-Ser bonds in kininogen to release Lys-bradykinin. The sequence is that of Kallikrein 1-related peptidase b9 (Klk1b9) from Mus musculus (Mouse).